A 378-amino-acid chain; its full sequence is O-methyltransferase dpfgI (378 aa).

S-adenosyl-L-methionine-binding positions include 232–233 (GG), Asp-257, 279–280 (NF), and Arg-295. The active-site Proton acceptor is His-299.

This sequence belongs to the class I-like SAM-binding methyltransferase superfamily. Cation-independent O-methyltransferase family.

It functions in the pathway secondary metabolite biosynthesis; terpenoid biosynthesis. Its function is as follows. O-methyltransferase; part of the gene cluster that mediates the biosynthesis of diterpenoid pyrones. The first step of the pathway is the synthesis of the alpha-pyrone moiety by the polyketide synthase dpfgA via condensation of one acetyl-CoA starter unit with 3 malonyl-CoA units and 2 methylations. The alpha-pyrone is then combined with geranylgeranyl pyrophosphate (GGPP) formed by the GGPP synthase dpfgD through the action of the prenyltransferase dpfgC to yield a linear alpha-pyrone diterpenoid. Subsequent steps in the diterpenoid pyrone biosynthetic pathway involve the decalin core formation, which is initiated by the epoxidation of the C10-C11 olefin by the FAD-dependent oxidoreductase dpfgE, and is followed by a cyclization cascade catalyzed by the terpene cyclase dpfgB. The short chain dehydrogenase/reductase dpfgG then oxidizes the 8S hydroxy group to a ketone and the short chain dehydrogenase/reductase dpfgH reduces the ketone to the 8R hydroxy group to yield higginsianin B. Higginsianin B is further methylated by the methyltransferase dpfgI to produce the intermediate named FDDP B. The cytochrome P450 monooxygenase dfgpJ then catalyzes a three-step oxidation at C-27 to generate a carboxylic acid as well as C-26 hydroxylation. Finally, methyltransferase dpfgK methylates the carboxylic acid generated by dpfgJ, yielding the final diterpenoid pyrones from the pathway which were named FDDP D and FDDP E. This Gibberella zeae (strain ATCC MYA-4620 / CBS 123657 / FGSC 9075 / NRRL 31084 / PH-1) (Wheat head blight fungus) protein is O-methyltransferase dpfgI.